A 131-amino-acid chain; its full sequence is Large-conductance mechanosensitive channel (131 aa).

3 consecutive transmembrane segments (helical) span residues 8–28 (FAIR…GAFG), 30–50 (IVSS…LGGI), and 67–87 (GAFI…FLFV).

This sequence belongs to the MscL family. As to quaternary structure, homopentamer.

It localises to the cell membrane. Its function is as follows. Channel that opens in response to stretch forces in the membrane lipid bilayer. May participate in the regulation of osmotic pressure changes within the cell. In Geobacillus thermodenitrificans (strain NG80-2), this protein is Large-conductance mechanosensitive channel.